The primary structure comprises 354 residues: UDP-N-acetylglucosamine--N-acetylmuramyl-(pentapeptide) pyrophosphoryl-undecaprenol N-acetylglucosamine transferase (354 aa).

Residues 11-13 (TAG), Arg-164, Ser-194, and Gln-289 contribute to the UDP-N-acetyl-alpha-D-glucosamine site.

This sequence belongs to the glycosyltransferase 28 family. MurG subfamily.

It localises to the cell membrane. It catalyses the reaction di-trans,octa-cis-undecaprenyl diphospho-N-acetyl-alpha-D-muramoyl-L-alanyl-D-glutamyl-meso-2,6-diaminopimeloyl-D-alanyl-D-alanine + UDP-N-acetyl-alpha-D-glucosamine = di-trans,octa-cis-undecaprenyl diphospho-[N-acetyl-alpha-D-glucosaminyl-(1-&gt;4)]-N-acetyl-alpha-D-muramoyl-L-alanyl-D-glutamyl-meso-2,6-diaminopimeloyl-D-alanyl-D-alanine + UDP + H(+). The protein operates within cell wall biogenesis; peptidoglycan biosynthesis. Cell wall formation. Catalyzes the transfer of a GlcNAc subunit on undecaprenyl-pyrophosphoryl-MurNAc-pentapeptide (lipid intermediate I) to form undecaprenyl-pyrophosphoryl-MurNAc-(pentapeptide)GlcNAc (lipid intermediate II). This chain is UDP-N-acetylglucosamine--N-acetylmuramyl-(pentapeptide) pyrophosphoryl-undecaprenol N-acetylglucosamine transferase, found in Clostridium botulinum (strain 657 / Type Ba4).